Here is a 446-residue protein sequence, read N- to C-terminus: Rhoptry surface protein CERLI1 (446 aa).

A C2 domain is found at 39 to 208 (KPIGQLYRLM…NQTKNNEKIE (170 aa)). Positions 252-363 (GYLLHSNFYI…ILVSNYKRER (112 aa)) constitute a PH domain.

It is found in the cytoplasmic vesicle. The protein localises to the secretory vesicle. The protein resides in the rhoptry membrane. Essential for merozoite invasion of host cells by controlling rhoptry secretion. Binds to phosphatidic acid (PA) and phosphatidylinositol 4,5-bisphosphate (PIP2) lipids and thus, likely contributes to the assembly of the machinery that docks or primes the rhoptry to the parasite cell membrane prior to the fusion with the host cell membrane. This Plasmodium falciparum (isolate 3D7) protein is Rhoptry surface protein CERLI1.